We begin with the raw amino-acid sequence, 553 residues long: Putative transport protein KPK_0013 (553 aa).

5 consecutive transmembrane segments (helical) span residues 4–24 (IALTVSVLALVAVVGLWIGNV), 28–48 (GVGFGIGGVLFGGIIVGHFVD), 65–85 (FGLILFVYTIGIQVGPGFFAS), 95–115 (LFAILIVILGGLVTAVLHKLF), and 158–178 (MSYAMAYPFGICGILLTMWLV). RCK C-terminal domains lie at 192 to 276 (RFEE…VIGQ) and 279 to 361 (ATSL…ELGN). Helical transmembrane passes span 371-391 (MLPVFIGIGLGVLLGSIPLFI), 403-425 (AGGPLIMALILGRIGSIGKLYWF), 437-457 (LGIVLFLAVVGLKSGGDFVAT), 464-484 (LSWIAYGIFITAIPLLTVGIL), 493-513 (YLTLCGMLAGSMTDPPALAFA), and 532-552 (PLVMFLRIITPQLLAVLFWGL).

Belongs to the AAE transporter (TC 2.A.81) family. YidE subfamily.

The protein localises to the cell membrane. The chain is Putative transport protein KPK_0013 from Klebsiella pneumoniae (strain 342).